Reading from the N-terminus, the 706-residue chain is 1,4-alpha-glucan-branching enzyme (706 aa).

W96 and K133 together coordinate (1,4-alpha-D-glucosyl)n. D358 acts as the Nucleophile in catalysis. The active-site Proton donor is the E419.

This sequence belongs to the glycosyl hydrolase 13 family. GlgB subfamily. Monomer.

The protein resides in the cytoplasm. The catalysed reaction is Transfers a segment of a (1-&gt;4)-alpha-D-glucan chain to a primary hydroxy group in a similar glucan chain.. It participates in glycan biosynthesis; glycogen biosynthesis. Functionally, glycogen-branching enzyme participates in the glycogen biosynthetic process along with glycogenin and glycogen synthase. Generates alpha-1,6-glucosidic branches from alpha-1,4-linked glucose chains, to increase solubility of the glycogen polymer. The sequence is that of 1,4-alpha-glucan-branching enzyme (GLC3) from Candida glabrata (strain ATCC 2001 / BCRC 20586 / JCM 3761 / NBRC 0622 / NRRL Y-65 / CBS 138) (Yeast).